The chain runs to 250 residues: MENTIVVKLGGVASDNLTEDFFQQIIQWQAANKKIVLVHGGGHYITKMMKSLAIPVETKNGLRVTNKATLEVTKMVLIGQVQPAITTAFQKRNISVIGLNAGDTGLLEADFLNDANLGFVGKITKVKTDLIEQLLSENIITVIAPLGINSEYDWLNVNADTAACEVASALQAEALYLLTDVPGVKKGSEIIGEIATDEIEKLQYAGVIKGGMIPKLASAAFAAENGVGKVIITDSLNTSGTKIKNKVAIG.

Substrate contacts are provided by residues G41–G42, R63, and N156.

The protein belongs to the acetylglutamate kinase family. ArgB subfamily.

Its subcellular location is the cytoplasm. It carries out the reaction N-acetyl-L-glutamate + ATP = N-acetyl-L-glutamyl 5-phosphate + ADP. Its pathway is amino-acid biosynthesis; L-arginine biosynthesis; N(2)-acetyl-L-ornithine from L-glutamate: step 2/4. In terms of biological role, catalyzes the ATP-dependent phosphorylation of N-acetyl-L-glutamate. This chain is Acetylglutamate kinase, found in Listeria monocytogenes serotype 4b (strain CLIP80459).